The chain runs to 413 residues: RNA-binding protein 41 (413 aa).

The segment at 225–247 (SGSGTAEKPSLLQDKGKQAAQGK) is disordered. An RRM domain is found at 309-387 (KVLYLKNLSP…KILVIEFAKS (79 aa)).

May bind RNA. The chain is RNA-binding protein 41 (Rbm41) from Mus musculus (Mouse).